The following is a 502-amino-acid chain: Zinc finger protein 488 (502 aa).

The SET domain occupies 8–130 (RSLWTNDSKI…EGEELLVWYD (123 aa)). Tyr-129 lines the S-adenosyl-L-methionine pocket. Residues 151-174 (YTCTRCGQAFKNENPFLAHCRFLC) form a C2H2-type 1; atypical zinc finger. Disordered regions lie at residues 267–303 (SEPT…KSSR) and 338–361 (PSKR…LDSF). The span at 269 to 286 (PTDNAQTNESKISKNSAF) shows a compositional bias: polar residues. 2 consecutive C2H2-type zinc fingers follow at residues 438–460 (NWCA…MRSH) and 479–501 (LTCP…MTSH).

Belongs to the krueppel C2H2-type zinc-finger protein family. Expressed in pMN progenitors and oligodendrocyte lineage cells in the embryo with expression declining in oligodendrocytes undergoing differentiation.

It is found in the nucleus. Transcriptional repressor. May have histone methyltransferase activity. Negatively regulates shh signaling activity in pMN progenitor cells which prevents their switch from motor neuron to oligodendrocyte precursor cell production. Independently of shh activity, also regulates oligodendrocyte formation. In Danio rerio (Zebrafish), this protein is Zinc finger protein 488.